Consider the following 220-residue polypeptide: Charged multivesicular body protein 2a (220 aa).

Met1 carries the post-translational modification N-acetylmethionine. 2 coiled-coil regions span residues 12 to 52 (EELL…KMAK) and 195 to 220 (RAAE…LRRD). Positions 208-218 (ADLEERLKNLR) match the MIT-interacting motif motif.

It belongs to the SNF7 family. As to quaternary structure, probable core component of the endosomal sorting required for transport complex III (ESCRT-III). ESCRT-III components are thought to multimerize to form a flat lattice on the perimeter membrane of the endosome.

Its subcellular location is the late endosome membrane. It is found in the cytoplasm. Probable core component of the endosomal sorting required for transport complex III (ESCRT-III) which is involved in multivesicular bodies (MVBs) formation and sorting of endosomal cargo proteins into MVBs. MVBs contain intraluminal vesicles (ILVs) that are generated by invagination and scission from the limiting membrane of the endosome and mostly are delivered to lysosomes enabling degradation of membrane proteins, such as stimulated growth factor receptors, lysosomal enzymes and lipids. The polypeptide is Charged multivesicular body protein 2a (CHMP2A) (Gallus gallus (Chicken)).